The chain runs to 459 residues: Glutamate--tRNA ligase 2 (459 aa).

The 'HIGH' region signature appears at 8-18 (PSPTGYLHIGG). Residues 237 to 241 (KLSKR) carry the 'KMSKS' region motif. K240 contacts ATP.

This sequence belongs to the class-I aminoacyl-tRNA synthetase family. Glutamate--tRNA ligase type 1 subfamily. As to quaternary structure, monomer.

The protein resides in the cytoplasm. The catalysed reaction is tRNA(Glu) + L-glutamate + ATP = L-glutamyl-tRNA(Glu) + AMP + diphosphate. Its function is as follows. Catalyzes the attachment of glutamate to tRNA(Glu) in a two-step reaction: glutamate is first activated by ATP to form Glu-AMP and then transferred to the acceptor end of tRNA(Glu). In Campylobacter concisus (strain 13826), this protein is Glutamate--tRNA ligase 2.